The primary structure comprises 61 residues: Defensin BmKDfsin1 (61 aa).

A signal peptide spans 1–25 (MKTIVLLFVLVLVFALLVKMGMVEA). 3 disulfides stabilise this stretch: Cys-29–Cys-50, Cys-36–Cys-58, and Cys-40–Cys-60.

The protein belongs to the invertebrate defensin family. Type 2 subfamily. As to expression, highly expressed in non-venom gland (hemolymph) and moderately expressed in venom gland.

The protein resides in the secreted. In terms of biological role, antibacterial peptide active against Gram-positive bacteria, but not on Gram-negative bacteria. Also has weak blocking activity on Kv1.1/KCNA1, Kv1.2/KCNA2, Kv1.3/KCNA3, KCa3.1/KCNN4/IK, KCa2.3/KCNN3/SK3 and Kv11.1/KCNH2/ERG1 channels (tested at 1 uM). It inhibits potassium channel current by interacting with the pore region. The polypeptide is Defensin BmKDfsin1 (Olivierus martensii (Manchurian scorpion)).